The following is a 310-amino-acid chain: Transcription initiation factor IIA subunit 1 (310 aa).

Disordered stretches follow at residues 52–78 (AISN…LSTV), 91–197 (IQLN…NNKD), and 218–261 (VIPQ…DDPD). Low complexity-rich tracts occupy residues 62–77 (TTAT…TLST) and 122–160 (SNGT…PSSL). 3 stretches are compositionally biased toward acidic residues: residues 173–183 (TLDESDNDDDN), 225–236 (LNDDDDLDDEEI), and 246–261 (DSLG…DDPD).

Belongs to the TFIIA subunit 1 family. TFIIA is a heterodimer of the large subunit 1 and a small subunit gamma.

It is found in the nucleus. Its function is as follows. TFIIA is a component of the transcription machinery of RNA polymerase II and plays an important role in transcriptional activation. TFIIA in a complex with tbp mediates transcriptional activity. The sequence is that of Transcription initiation factor IIA subunit 1 (gtf2a1) from Dictyostelium discoideum (Social amoeba).